The chain runs to 50 residues: Ornatin-E (50 aa).

The Cell attachment site signature appears at 42-44 (RGD).

This sequence belongs to the ornatin family.

Its subcellular location is the secreted. Its function is as follows. Potent inhibitor of fibrinogen interaction with platelet receptors expressed on glycoprotein IIb-IIIa complex. May prevent blood from clotting during either feeding and/or storage of ingested blood. The polypeptide is Ornatin-E (Placobdella ornata (Turtle leech)).